Here is a 1170-residue protein sequence, read N- to C-terminus: Structural maintenance of chromosomes protein 2 (1170 aa).

32-39 (GLNGSGKS) is a binding site for ATP. The stretch at 172–469 (KMFEDRREKA…DKLRARLVEY (298 aa)) forms a coiled coil. In terms of domain architecture, SMC hinge spans 523–641 (VHGVVGQLFQ…CEDPETAKKI (119 aa)). The stretch at 678–1027 (VDIQKYNQIQ…ISKLNEYKRE (350 aa)) forms a coiled coil.

The protein belongs to the SMC family. SMC2 subfamily. As to quaternary structure, forms a heterodimer with SMC4. Component of the condensin complex, which contains the SMC2 and SMC4 heterodimer, and three non SMC subunits that probably regulate the complex: BRN1, YCS4 and YCG1/YCS5.

The protein resides in the nucleus. The protein localises to the cytoplasm. It is found in the chromosome. In terms of biological role, central component of the condensin complex, a complex required for conversion of interphase chromatin into mitotic-like condense chromosomes. The condensin complex probably introduces positive supercoils into relaxed DNA in the presence of type I topoisomerases and converts nicked DNA into positive knotted forms in the presence of type II topoisomerases. The chain is Structural maintenance of chromosomes protein 2 (SMC2) from Saccharomyces cerevisiae (strain ATCC 204508 / S288c) (Baker's yeast).